Reading from the N-terminus, the 411-residue chain is MARDLKDCRVPCKLLLEDLQALCRRKKLVCKQLSVTKNNFNDYEVEYLCNYKKHKGREFFLVKWKGYEESENTWEPLKNLKCPILLHQFRKDMKAALLQANEPLDSASLSGPIISFLRQKATQRIRLKKWEDLMNQTCWHKGRIFVSNEVDMDGPPKNFTYINENKLGKGVDMNAVIVGCECEDCVSQPVDGCCPGLLKFRRAYNESRRVKVMPGVPIYECNSKCRCGPDCANRVVQRGIQYDLCIFKTDNGRGWGVRTLQRINKNSFVMEYLGEIITTDEAEQRGVLYDKQGVTYLFDLDYVDDVYTIDAAHYGNISHFVNHSCDPNLQVYNVFIDNLDERLPRIALFAKRGIKAGEELTFDYKMTVDPVDAESTKMDLDFSRAGIEGSPIKRVHMECKCGVRNCRKYLF.

One can recognise a Chromo domain in the interval 43-101 (YEVEYLCNYKKHKGREFFLVKWKGYEESENTWEPLKNLKCPILLHQFRKDMKAALLQAN). The Pre-SET domain occupies 178 to 239 (VGCECEDCVS…DCANRVVQRG (62 aa)). Zn(2+) is bound by residues cysteine 180, cysteine 182, cysteine 185, cysteine 193, cysteine 194, cysteine 221, cysteine 225, cysteine 227, and cysteine 231. The SET domain maps to 242 to 365 (YDLCIFKTDN…AGEELTFDYK (124 aa)). S-adenosyl-L-methionine-binding positions include 253-255 (RGW), tyrosine 296, and 322-323 (NH). Positions 325, 399, 401, and 406 each coordinate Zn(2+). Residues 395-411 (VHMECKCGVRNCRKYLF) enclose the Post-SET domain.

It belongs to the class V-like SAM-binding methyltransferase superfamily. Histone-lysine methyltransferase family. Suvar3-9 subfamily. As to expression, expressed ubuitiously.

Its subcellular location is the nucleus. It localises to the chromosome. It is found in the centromere. The enzyme catalyses N(6)-methyl-L-lysyl(9)-[histone H3] + S-adenosyl-L-methionine = N(6),N(6)-dimethyl-L-lysyl(9)-[histone H3] + S-adenosyl-L-homocysteine + H(+). It carries out the reaction N(6),N(6)-dimethyl-L-lysyl(9)-[histone H3] + S-adenosyl-L-methionine = N(6),N(6),N(6)-trimethyl-L-lysyl(9)-[histone H3] + S-adenosyl-L-homocysteine + H(+). Histone methyltransferase that specifically trimethylates 'Lys-9' of histone H3 using monomethylated H3 'Lys-9' as substrate. H3 'Lys-9' trimethylation represents a specific tag for epigenetic transcriptional repression by recruiting HP1 (CBX1, CBX3 and/or CBX5) proteins to methylated histones. Mainly functions in heterochromatin regions, thereby playing a central role in the establishment of constitutive heterochromatin at pericentric and telomere regions. H3 'Lys-9' trimethylation is also required to direct DNA methylation at pericentric repeats. SUV39H1 is targeted to histone H3 via its interaction with RB1 and is involved in many processes, such as regulation of organ-specific terminal differentiation during development. The chain is Histone-lysine N-methyltransferase SUV39H1-A (suv39h1a) from Danio rerio (Zebrafish).